The following is a 187-amino-acid chain: ATP synthase subunit b (187 aa).

A helical membrane pass occupies residues 36–53 (PYQWVSVAMLVLIAIMLW).

It belongs to the ATPase B chain family. As to quaternary structure, F-type ATPases have 2 components, F(1) - the catalytic core - and F(0) - the membrane proton channel. F(1) has five subunits: alpha(3), beta(3), gamma(1), delta(1), epsilon(1). F(0) has four main subunits: a(1), b(2) and c(10-14). The alpha and beta chains form an alternating ring which encloses part of the gamma chain. F(1) is attached to F(0) by a central stalk formed by the gamma and epsilon chains, while a peripheral stalk is formed by the delta and b chains.

It localises to the cell inner membrane. F(1)F(0) ATP synthase produces ATP from ADP in the presence of a proton or sodium gradient. F-type ATPases consist of two structural domains, F(1) containing the extramembraneous catalytic core and F(0) containing the membrane proton channel, linked together by a central stalk and a peripheral stalk. During catalysis, ATP synthesis in the catalytic domain of F(1) is coupled via a rotary mechanism of the central stalk subunits to proton translocation. Its function is as follows. Component of the F(0) channel, it forms part of the peripheral stalk, linking F(1) to F(0). In Erythrobacter litoralis (strain HTCC2594), this protein is ATP synthase subunit b.